A 146-amino-acid polypeptide reads, in one-letter code: MLAGAGRPGLPQGRHLCWLLCAFTLKLCQAEAPVQEEKLSASTSNLPCWLVEEFVVAEECSPCSNFRAKTTPECGPTGYVEKITCSSSKRNEFKSCRSALMEQRLFWKFEGAVVCVALIFACLVIIRQRQLDRKALEKVRKQIESI.

Positions 1-30 (MLAGAGRPGLPQGRHLCWLLCAFTLKLCQA) are cleaved as a signal peptide. Over 31–105 (EAPVQEEKLS…CRSALMEQRL (75 aa)) the chain is Extracellular. The chain crosses the membrane as a helical span at residues 106-126 (FWKFEGAVVCVALIFACLVII). Residues 127-146 (RQRQLDRKALEKVRKQIESI) lie on the Cytoplasmic side of the membrane.

Belongs to the JTB family. As to quaternary structure, interacts with AURKA, AURKB, BIRC5 and INCENP. May be a component of the CPC at least composed of BIRC5/survivin, CDCA8/borealin, INCENP and AURKB/Aurora-B. Ubiquitous. Expressed in all normal human tissues studied but overexpressed or underexpressed in many of their malignant counterparts.

It localises to the membrane. It is found in the mitochondrion. Its subcellular location is the cytoplasm. The protein resides in the cytoskeleton. The protein localises to the microtubule organizing center. It localises to the centrosome. It is found in the spindle. In terms of biological role, required for normal cytokinesis during mitosis. Plays a role in the regulation of cell proliferation. May be a component of the chromosomal passenger complex (CPC), a complex that acts as a key regulator of mitosis. The CPC complex has essential functions at the centromere in ensuring correct chromosome alignment and segregation and is required for chromatin-induced microtubule stabilization and spindle assembly. Increases AURKB activity. Inhibits apoptosis induced by TGFB1. Overexpression induces swelling of mitochondria and reduces mitochondrial membrane potential. This chain is Protein JTB (JTB), found in Homo sapiens (Human).